The primary structure comprises 175 residues: 3-hydroxydecanoyl-[acyl-carrier-protein] dehydratase (175 aa).

Residue His-74 is part of the active site.

Belongs to the thioester dehydratase family. FabA subfamily. Homodimer.

The protein localises to the cytoplasm. The catalysed reaction is a (3R)-hydroxyacyl-[ACP] = a (2E)-enoyl-[ACP] + H2O. It carries out the reaction (3R)-hydroxydecanoyl-[ACP] = (2E)-decenoyl-[ACP] + H2O. It catalyses the reaction (2E)-decenoyl-[ACP] = (3Z)-decenoyl-[ACP]. It functions in the pathway lipid metabolism; fatty acid biosynthesis. Its function is as follows. Necessary for the introduction of cis unsaturation into fatty acids. Catalyzes the dehydration of (3R)-3-hydroxydecanoyl-ACP to E-(2)-decenoyl-ACP and then its isomerization to Z-(3)-decenoyl-ACP. Can catalyze the dehydratase reaction for beta-hydroxyacyl-ACPs with saturated chain lengths up to 16:0, being most active on intermediate chain length. The polypeptide is 3-hydroxydecanoyl-[acyl-carrier-protein] dehydratase (Alcanivorax borkumensis (strain ATCC 700651 / DSM 11573 / NCIMB 13689 / SK2)).